The primary structure comprises 83 residues: Exodeoxyribonuclease 7 small subunit (83 aa).

The protein belongs to the XseB family. In terms of assembly, heterooligomer composed of large and small subunits.

The protein localises to the cytoplasm. The catalysed reaction is Exonucleolytic cleavage in either 5'- to 3'- or 3'- to 5'-direction to yield nucleoside 5'-phosphates.. Functionally, bidirectionally degrades single-stranded DNA into large acid-insoluble oligonucleotides, which are then degraded further into small acid-soluble oligonucleotides. This Rhodopseudomonas palustris (strain BisB5) protein is Exodeoxyribonuclease 7 small subunit.